A 344-amino-acid chain; its full sequence is MEDSGKTFESEEEETNYWRDLAMTYKQRAENTQEELREFQEGSREYEAELEAQLQQIETRNRDLLSENNRLRMELESVKEKFEMQHSEGYRQISALEDDLAQTKAIKDQLQKYIRELEQANDDLERAKRATIMSLEDFEQRLNQAIERNAFLESELDEKENLLESVQRLKDEARDLRQELAVQQKQDKPRTPMPGSGQAKRTDMAVQATGSVPSTPVAHRGPSSGLNTPGMFRRGLDSSTSGTPLTPAARISALNIVGDLLRKVGALESKLASCRNFMYDQSPSRTSGPASGRGTKNRDGVDRRPGSTSVGDKGSGKRLEFGKPASEPASPALPSAQGVVKLLL.

A self-association region spans residues methionine 1 to isoleucine 93. Residues tryptophan 18–lysine 188 are a coiled coil. Residues glutamate 88 to leucine 156 are interaction with PAFAH1B1. The interaction with CENPF stretch occupies residues glutamine 167–alanine 290. Positions alanine 181–threonine 246 are disordered. Serine 211 is subject to Phosphoserine. Phosphothreonine occurs at positions 215 and 228. Serine 239 bears the Phosphoserine mark. 2 positions are modified to phosphothreonine: threonine 243 and threonine 246. Cysteine 274 carries the S-palmitoyl cysteine; by ZDHHC2, ZDHHC3 and ZDHHC7 lipid modification. Residues tyrosine 279–proline 289 show a composition bias toward polar residues. The tract at residues tyrosine 279–glutamine 337 is disordered. A Phosphoserine modification is found at serine 282. The span at lysine 296 to proline 305 shows a compositional bias: basic and acidic residues. A Phosphoserine modification is found at serine 309. The segment covering proline 324–alanine 336 has biased composition (low complexity).

This sequence belongs to the nudE family. As to quaternary structure, homodimer. Interacts with dynactin and PCM1. Interacts with CENPF, LIS1, CNTRL, dynein, tubulin gamma, PAFAH1B1, PCNT, SLMAP and TCP1. Interacts with ZNF365. Interacts with RAB9A; the interaction leads to RAB9A-dynein motor tethering. Interacts (via C-terminus) with MCRS1 (via C-terminus); phosphorylation of NDE1 inhibits the interaction. Post-translationally, phosphorylated in mitosis. Phosphorylation at Thr-246 is essential for the G2/M transition. In terms of tissue distribution, highly expressed in ovary. Also expressed in brain, heart, kidney, large intestine, liver, lung, small intestine and testis.

It is found in the cytoplasm. The protein localises to the cytoskeleton. It localises to the microtubule organizing center. Its subcellular location is the centrosome. The protein resides in the spindle. It is found in the chromosome. The protein localises to the centromere. It localises to the kinetochore. Its subcellular location is the cleavage furrow. The protein resides in the cytoplasmic vesicle membrane. Functionally, required for centrosome duplication and formation and function of the mitotic spindle. Essential for the development of the cerebral cortex. May regulate the production of neurons by controlling the orientation of the mitotic spindle during division of cortical neuronal progenitors of the proliferative ventricular zone of the brain. Orientation of the division plane perpendicular to the layers of the cortex gives rise to two proliferative neuronal progenitors whereas parallel orientation of the division plane yields one proliferative neuronal progenitor and a postmitotic neuron. A premature shift towards a neuronal fate within the progenitor population may result in an overall reduction in the final number of neurons and an increase in the number of neurons in the deeper layers of the cortex. Acts as a RAB9A/B effector that tethers RAB9-associated late endosomes to the dynein motor for their retrograde transport to the trans-Golgi network. The polypeptide is Nuclear distribution protein nudE homolog 1 (Mus musculus (Mouse)).